The chain runs to 226 residues: Uracil-DNA glycosylase (226 aa).

The active-site Proton acceptor is the Asp-65.

Belongs to the uracil-DNA glycosylase (UDG) superfamily. UNG family.

It localises to the cytoplasm. The catalysed reaction is Hydrolyzes single-stranded DNA or mismatched double-stranded DNA and polynucleotides, releasing free uracil.. Its function is as follows. Excises uracil residues from the DNA which can arise as a result of misincorporation of dUMP residues by DNA polymerase or due to deamination of cytosine. This is Uracil-DNA glycosylase from Bacillus pumilus (strain SAFR-032).